The sequence spans 170 residues: Lipoprotein signal peptidase (170 aa).

Helical transmembrane passes span Trp-12–Ala-32, Trp-67–Leu-87, and Ser-93–Ile-113. Active-site residues include Asp-123 and Asp-141. Residues Phe-137 to Phe-157 traverse the membrane as a helical segment.

It belongs to the peptidase A8 family.

It localises to the cell inner membrane. It carries out the reaction Release of signal peptides from bacterial membrane prolipoproteins. Hydrolyzes -Xaa-Yaa-Zaa-|-(S,diacylglyceryl)Cys-, in which Xaa is hydrophobic (preferably Leu), and Yaa (Ala or Ser) and Zaa (Gly or Ala) have small, neutral side chains.. It functions in the pathway protein modification; lipoprotein biosynthesis (signal peptide cleavage). In terms of biological role, this protein specifically catalyzes the removal of signal peptides from prolipoproteins. The chain is Lipoprotein signal peptidase from Shewanella sp. (strain MR-4).